We begin with the raw amino-acid sequence, 372 residues long: Cobalt-precorrin-5B C(1)-methyltransferase (372 aa).

It belongs to the CbiD family.

It carries out the reaction Co-precorrin-5B + S-adenosyl-L-methionine = Co-precorrin-6A + S-adenosyl-L-homocysteine. It functions in the pathway cofactor biosynthesis; adenosylcobalamin biosynthesis; cob(II)yrinate a,c-diamide from sirohydrochlorin (anaerobic route): step 6/10. Its function is as follows. Catalyzes the methylation of C-1 in cobalt-precorrin-5B to form cobalt-precorrin-6A. The protein is Cobalt-precorrin-5B C(1)-methyltransferase of Geobacillus kaustophilus (strain HTA426).